A 202-amino-acid polypeptide reads, in one-letter code: Putative transposon Tn552 DNA-invertase bin3 (202 aa).

A Resolvase/invertase-type recombinase catalytic domain is found at 1–143 (MIIGYARVSS…QGIQVAKEKG (143 aa)). Ser9 functions as the O-(5'-phospho-DNA)-serine intermediate in the catalytic mechanism.

The protein belongs to the site-specific recombinase resolvase family.

Its function is as follows. Potential DNA invertase. This is Putative transposon Tn552 DNA-invertase bin3 (bin3) from Staphylococcus aureus.